We begin with the raw amino-acid sequence, 875 residues long: Leucine--tRNA ligase (875 aa).

The 'HIGH' region motif lies at 43–53; sequence PYPSGRIHMGH. The short motif at 633–637 is the 'KMSKS' region element; sequence KMSKS. Residue lysine 636 coordinates ATP.

The protein belongs to the class-I aminoacyl-tRNA synthetase family.

The protein resides in the cytoplasm. The enzyme catalyses tRNA(Leu) + L-leucine + ATP = L-leucyl-tRNA(Leu) + AMP + diphosphate. The protein is Leucine--tRNA ligase of Bartonella bacilliformis (strain ATCC 35685 / KC583 / Herrer 020/F12,63).